We begin with the raw amino-acid sequence, 176 residues long: Telomerase RNA component interacting RNase (176 aa).

Over residues 1–12 the composition is skewed to basic and acidic residues; sequence MAARGRRAEPQG. Residues 1-121 form a disordered region; that stretch reads MAARGRRAEP…TLSFVGKRRG (121 aa). The span at 45–56 shows a compositional bias: low complexity; it reads SGAGSSPVSGGV. The segment covering 68–83 has biased composition (basic and acidic residues); it reads LFKRKMEEEQRQRQEE. Positions 90–101 are enriched in low complexity; sequence RPDQSAAAAGPG. Lysine 146 carries the N6-acetyllysine modification.

In terms of assembly, part of the telomerase RNA 3' end complex which contains about 488 proteins.

With respect to regulation, zn(2+) inhibits the RNase activity while Mg(2+), Ca(2+), Mn(2+), K(+), Na(+), EDTA and EGTA show little effect on the exoribonuclease activity. Exoribonuclease that is part of the telomerase RNA 3' end processing complex and which has the ability to cleave all four unpaired RNA nucleotides from the 5' end or 3' end with higher efficiency for purine bases. The sequence is that of Telomerase RNA component interacting RNase from Homo sapiens (Human).